Reading from the N-terminus, the 114-residue chain is Flagellar hook-basal body complex protein FliE (114 aa).

This sequence belongs to the FliE family.

The protein resides in the bacterial flagellum basal body. This chain is Flagellar hook-basal body complex protein FliE, found in Desulfitobacterium hafniense (strain DSM 10664 / DCB-2).